Reading from the N-terminus, the 488-residue chain is PTS system mannitol-specific EIICB component (488 aa).

Topologically, residues 1–26 are cytoplasmic; the sequence is MRKKLAKVKVHIQSLDSLLSSMTMPI. The 348-residue stretch at 15-362 folds into the PTS EIIC type-2 domain; the sequence is LDSLLSSMTM…LSLTRKKQLK (348 aa). A helical membrane pass occupies residues 27 to 48; the sequence is IGIFIAWGLLASFFIPSGWTPD. At 49 to 52 the chain is on the extracellular side; that stretch reads KNLA. Residues 53–73 form a helical membrane-spanning segment; sequence LMVGIGIQYVIPTIIXFFGGK. Topologically, residues 74 to 147 are cytoplasmic; it reads KIYEIRGGVI…SGFEMLVNNF (74 aa). Residues 148-169 traverse the membrane as a helical segment; the sequence is YLGFLGFALIFPSFYLSIYLIG. At 170 to 178 the chain is on the extracellular side; it reads YIQLGLKLL. The helical transmembrane segment at 179 to 199 threads the bilayer; the sequence is VEIMQQYKLYPIAAIVIEPAK. Over 200–289 the chain is Cytoplasmic; that stretch reads VLFLNNAINH…VLLKPVLILA (90 aa). The chain crosses the membrane as a helical span at residues 290–309; that stretch reads TIAVGVVGNGILQIFNAGTI. Over 310–331 the chain is Extracellular; that stretch reads APVSPGSVIAGFLQINKTPLDV. A helical membrane pass occupies residues 332–353; sequence AGYALALVLSAVTSLLISLLLL. The Cytoplasmic portion of the chain corresponds to 354–488; it reads SLTRKKQLKT…IIEKIKNEKN (135 aa). The region spanning 397–488 is the PTS EIIB type-2 domain; it reads SQVTFVCDAG…IIEKIKNEKN (92 aa). Cys-403 serves as the catalytic Phosphocysteine intermediate; for EIIB activity. The residue at position 403 (Cys-403) is a Phosphocysteine; by EIIA.

As to quaternary structure, homodimer.

Its subcellular location is the cell membrane. The catalysed reaction is D-mannitol(out) + N(pros)-phospho-L-histidyl-[protein] = D-mannitol 1-phosphate(in) + L-histidyl-[protein]. Functionally, the phosphoenolpyruvate-dependent sugar phosphotransferase system (sugar PTS), a major carbohydrate active transport system, catalyzes the phosphorylation of incoming sugar substrates concomitantly with their translocation across the cell membrane. The enzyme II CmtAB PTS system is involved in D-mannitol transport. The sequence is that of PTS system mannitol-specific EIICB component (mtlA) from Mycoplasma pneumoniae (strain ATCC 29342 / M129 / Subtype 1) (Mycoplasmoides pneumoniae).